A 643-amino-acid chain; its full sequence is Fructose-1,6-bisphosphatase class 3 (643 aa).

It belongs to the FBPase class 3 family. Mn(2+) is required as a cofactor.

It carries out the reaction beta-D-fructose 1,6-bisphosphate + H2O = beta-D-fructose 6-phosphate + phosphate. Its pathway is carbohydrate biosynthesis; gluconeogenesis. This chain is Fructose-1,6-bisphosphatase class 3, found in Lacticaseibacillus paracasei (strain ATCC 334 / BCRC 17002 / CCUG 31169 / CIP 107868 / KCTC 3260 / NRRL B-441) (Lactobacillus paracasei).